Consider the following 391-residue polypeptide: Aminoacetone oxidase (391 aa).

6 residues coordinate FAD: A14, E33, I134, E362, N374, and I375.

This sequence belongs to the BaiN/RdsA family. Monomer. FAD is required as a cofactor.

Functionally, flavoprotein that probably catalyzes the condensation of two molecules of aminoacetone to yield 3,6-dimethyl-2,5-dihydropyrazine, which is subsequently oxidized to 2,5-dimethylpyrazine. It could be involved in a microbial defense mechanism related to aminoacetone catabolism through a pathway yielding dimethylpyrazine derivatives instead of methylglyoxal. It has also low aminoacetone oxidase activity, and can produce hydrogen peroxide from aminoacetone. In addition, it shows very low L-amino acid oxidase activity, and can produce hydrogen peroxide from peptone and from seven amino acids, L-aspartate, L-tryptophan, L-lysine, L-isoleucine, L-arginine, L-asparagine and L-glutamine. It cannot use L-malate, oxaloacetate or alpha-aminobutyrate. Plays a role in antioxidant defense. This is Aminoacetone oxidase from Streptococcus cristatus.